Here is a 472-residue protein sequence, read N- to C-terminus: 3-isopropylmalate dehydratase large subunit (472 aa).

[4Fe-4S] cluster is bound by residues C347, C407, and C410.

Belongs to the aconitase/IPM isomerase family. LeuC type 1 subfamily. In terms of assembly, heterodimer of LeuC and LeuD. Requires [4Fe-4S] cluster as cofactor.

It catalyses the reaction (2R,3S)-3-isopropylmalate = (2S)-2-isopropylmalate. Its pathway is amino-acid biosynthesis; L-leucine biosynthesis; L-leucine from 3-methyl-2-oxobutanoate: step 2/4. Functionally, catalyzes the isomerization between 2-isopropylmalate and 3-isopropylmalate, via the formation of 2-isopropylmaleate. This chain is 3-isopropylmalate dehydratase large subunit, found in Opitutus terrae (strain DSM 11246 / JCM 15787 / PB90-1).